We begin with the raw amino-acid sequence, 93 residues long: MTKSELIERIVTQQGLLSSKDVELAIKTMLEQMAQALATGERIEIRGFGSFSLHYRAPRVGRNPKTGQSVSLDGKFVPHFKPGKELRDRVNDD.

The tract at residues 59 to 93 (RVGRNPKTGQSVSLDGKFVPHFKPGKELRDRVNDD) is disordered. Basic and acidic residues predominate over residues 82-93 (PGKELRDRVNDD).

This sequence belongs to the bacterial histone-like protein family. Heterodimer of an alpha and a beta chain.

In terms of biological role, this protein is one of the two subunits of integration host factor, a specific DNA-binding protein that functions in genetic recombination as well as in transcriptional and translational control. This chain is Integration host factor subunit beta, found in Stutzerimonas stutzeri (strain A1501) (Pseudomonas stutzeri).